The primary structure comprises 150 residues: Lipoprotein signal peptidase (150 aa).

Transmembrane regions (helical) follow at residues 8–28 (FYAL…LAHA), 58–78 (GFSW…GWFL), and 81–101 (TTGS…NVFD). Residues Asp116 and Asp132 contribute to the active site. Residues 126 to 146 (VVFNIADLFILAGVFGTFLFL) form a helical membrane-spanning segment.

This sequence belongs to the peptidase A8 family.

Its subcellular location is the cell membrane. The enzyme catalyses Release of signal peptides from bacterial membrane prolipoproteins. Hydrolyzes -Xaa-Yaa-Zaa-|-(S,diacylglyceryl)Cys-, in which Xaa is hydrophobic (preferably Leu), and Yaa (Ala or Ser) and Zaa (Gly or Ala) have small, neutral side chains.. It functions in the pathway protein modification; lipoprotein biosynthesis (signal peptide cleavage). Functionally, this protein specifically catalyzes the removal of signal peptides from prolipoproteins. This chain is Lipoprotein signal peptidase, found in Tropheryma whipplei (strain Twist) (Whipple's bacillus).